The chain runs to 210 residues: Na(+)-translocating NADH-quinone reductase subunit D (210 aa).

Transmembrane regions (helical) follow at residues 14-34 (PIVNNNPIALQILGVCSALAV), 42-62 (LVMALALTAVTAFSNLFISLI), 72-92 (IIVQMTIIASLVIVVDQLLQA), 103-123 (VFVGLIITNCIVMGRAEAYAM), 131-151 (FMDGIGNGLGYGVILLAVGFV), and 178-198 (NGMLLLPPSAFFLIGILIWII).

It belongs to the NqrDE/RnfAE family. As to quaternary structure, composed of six subunits; NqrA, NqrB, NqrC, NqrD, NqrE and NqrF.

Its subcellular location is the cell inner membrane. It carries out the reaction a ubiquinone + n Na(+)(in) + NADH + H(+) = a ubiquinol + n Na(+)(out) + NAD(+). Its function is as follows. NQR complex catalyzes the reduction of ubiquinone-1 to ubiquinol by two successive reactions, coupled with the transport of Na(+) ions from the cytoplasm to the periplasm. NqrA to NqrE are probably involved in the second step, the conversion of ubisemiquinone to ubiquinol. This chain is Na(+)-translocating NADH-quinone reductase subunit D, found in Shewanella putrefaciens (strain CN-32 / ATCC BAA-453).